The following is a 1088-amino-acid chain: Platelet-derived growth factor receptor alpha (1088 aa).

An N-terminal signal peptide occupies residues 1–23; the sequence is MGTSQAFLVLSCLLTGPSLIVCQ. 5 consecutive Ig-like C2-type domains span residues 24-112, 116-200, 201-305, 318-409, and 413-516; these read LLLP…SEIE, IYIY…FKTS, EFNV…KTVT, PTFG…FELS, and PASI…LKLV. Residues 24–527 lie on the Extracellular side of the membrane; it reads LLLPSILPNE…PSLRSELTVA (504 aa). C48 and C99 form a disulfide bridge. 3 N-linked (GlcNAc...) asparagine glycosylation sites follow: N75, N102, and N178. 2 disulfides stabilise this stretch: C149/C188 and C234/C289. N-linked (GlcNAc...) asparagine glycosylation is found at N352, N358, N457, and N467. C434 and C500 are oxidised to a cystine. Residues 528-548 form a helical membrane-spanning segment; that stretch reads AAVLVLLVIVIVSLIVLVVIW. Residues 549–1088 lie on the Cytoplasmic side of the membrane; it reads KQKPRYEIRW…SSDLVEDSFL (540 aa). Phosphotyrosine; by autocatalysis is present on residues Y571 and Y573. The region spanning 592–953 is the Protein kinase domain; it reads LVLGRILGSG…HLSEIVENLL (362 aa). ATP is bound by residues 598–606 and K626; that span reads LGSGAFGKV. Residues Y719, Y730, Y741, Y753, Y761, and Y767 each carry the phosphotyrosine; by autocatalysis modification. Catalysis depends on D817, which acts as the Proton acceptor. Phosphotyrosine; by autocatalysis is present on residues Y848, Y987, and Y1017. Residues 1017-1088 form a disordered region; sequence YIIPLPDIDP…SSDLVEDSFL (72 aa). Over residues 1040-1058 the composition is skewed to polar residues; it reads SSQTSEESAIETGSSSSTF. The span at 1064–1088 shows a compositional bias: acidic residues; the sequence is ETIEDIDMMDDIGIDSSDLVEDSFL.

This sequence belongs to the protein kinase superfamily. Tyr protein kinase family. CSF-1/PDGF receptor subfamily. As to quaternary structure, interacts with homodimeric PDGFA, PDGFB and PDGFC, and with heterodimers formed by PDGFA and PDGFB. Monomer in the absence of bound ligand. Interaction with dimeric PDGFA, PDGFB and/or PDGFC leads to receptor dimerization, where both PDGFRA homodimers and heterodimers with PDGFRB are observed. Interacts (tyrosine phosphorylated) with SHB (via SH2 domain). Interacts (tyrosine phosphorylated) with SHF (via SH2 domain). Interacts (tyrosine phosphorylated) with SRC (via SH2 domain). Interacts (tyrosine phosphorylated) with PIK3R1. Interacts (tyrosine phosphorylated) with PLCG1 (via SH2 domain). Interacts (tyrosine phosphorylated) with CRK, GRB2 and GRB7. Interacts with CD248; this interaction promotes PDGF receptor signaling pathway. Ubiquitinated, leading to its internalization and degradation. Post-translationally, autophosphorylated on tyrosine residues upon ligand binding. Autophosphorylation occurs in trans, i.e. one subunit of the dimeric receptor phosphorylates tyrosine residues on the other subunit. Phosphorylation at Tyr-730 and Tyr-741 is important for interaction with PIK3R1. Phosphorylation at Tyr-719 and Tyr-753 is important for interaction with PTPN11. Phosphorylation at Tyr-761 is important for interaction with CRK. Phosphorylation at Tyr-571 and Tyr-573 is important for interaction with SRC and SRC family members. Phosphorylation at Tyr-987 and Tyr-1017 is important for interaction with PLCG1.

The protein localises to the cell membrane. Its subcellular location is the cell projection. It is found in the cilium. The protein resides in the golgi apparatus. The enzyme catalyses L-tyrosyl-[protein] + ATP = O-phospho-L-tyrosyl-[protein] + ADP + H(+). Present in an inactive conformation in the absence of bound ligand. Binding of PDGFA and/or PDGFB leads to dimerization and activation by autophosphorylation on tyrosine residues. Inhibited by imatinib, nilotinib and sorafenib. Tyrosine-protein kinase that acts as a cell-surface receptor for PDGFA, PDGFB and PDGFC and plays an essential role in the regulation of embryonic development, cell proliferation, survival and chemotaxis. Depending on the context, promotes or inhibits cell proliferation and cell migration. Plays an important role in the differentiation of bone marrow-derived mesenchymal stem cells. Required for normal skeleton development and cephalic closure during embryonic development. Required for normal development of the mucosa lining the gastrointestinal tract, and for recruitment of mesenchymal cells and normal development of intestinal villi. Plays a role in cell migration and chemotaxis in wound healing. Plays a role in platelet activation, secretion of agonists from platelet granules, and in thrombin-induced platelet aggregation. Binding of its cognate ligands - homodimeric PDGFA, homodimeric PDGFB, heterodimers formed by PDGFA and PDGFB or homodimeric PDGFC -leads to the activation of several signaling cascades; the response depends on the nature of the bound ligand and is modulated by the formation of heterodimers between PDGFRA and PDGFRB. Phosphorylates PIK3R1, PLCG1, and PTPN11. Activation of PLCG1 leads to the production of the cellular signaling molecules diacylglycerol and inositol 1,4,5-trisphosphate, mobilization of cytosolic Ca(2+) and the activation of protein kinase C. Phosphorylates PIK3R1, the regulatory subunit of phosphatidylinositol 3-kinase, and thereby mediates activation of the AKT1 signaling pathway. Mediates activation of HRAS and of the MAP kinases MAPK1/ERK2 and/or MAPK3/ERK1. Promotes activation of STAT family members STAT1, STAT3 and STAT5A and/or STAT5B. Receptor signaling is down-regulated by protein phosphatases that dephosphorylate the receptor and its down-stream effectors, and by rapid internalization of the activated receptor. This is Platelet-derived growth factor receptor alpha (Pdgfra) from Rattus norvegicus (Rat).